The sequence spans 1145 residues: MASNNHFMNSRSNLSTNSDAAEAERHQQPVSNSVTFARRTPSGRYVNYSRDDLDSELGSVDLTGYSVHIPPTPDNQPMDPSISQKVEEQYVSNSLFTGGFNSVTRAHLMEKVIDTETSHPQMAGAKGSSCAVPGCDVKVMSDERGQDLLPCECDFKICRDCFMDAVKTGGMCPGCKEPYRNTDLADFADNNKQQRPMLPPPAGGSKMDRRLSLMKSTKSGLMRSQTGDFDHNRWLFETSGTYGFGNAFWTKDGNFGSDKDGNGHGMGPQDLMSRPWRPLTRKLQIPAAVISPYRLLILIRIVVLALFLMWRIKHKNPDAIWLWGMSVVCELWFALSWLLDQLPKLCPINRATDLNVLKEKFETPTPSNPTGKSDLPGLDMFVSTADPEKEPPLVTSNTILSILAADYPVEKLACYVSDDGGALLTFEAMAEAASFANMWVPFCRKHNIEPRNPDSYFSLKRDPYKNKVKADFVKDRRRVKREYDEFKVRINSLPDSIRRRSDAYHAREEIKAMKLQRQNRDEEIVEPVKIPKATWMADGTHWPGTWINSGPDHSRSDHAGIIQVMLKPPSDEPLHGVSEGFLDLTDVDIRLPLLVYVSREKRPGYDHNKKAGAMNALVRASAIMSNGPFILNLDCDHYIYNSQALREGMCFMMDRGGDRLCYVQFPQRFEGIDPSDRYANHNTVFFDVNMRALDGLMGPVYVGTGCLFRRIALYGFDPPRAKEHHPGFCSCCFSRKKKKSRVPEENRSLRMGGDSDDDEEMNLSLVPKKFGNSTFLIDSIPVAEFQGRPLADHPAVQNGRPPGALTIPRELLDASTVAEAIAVISCWYEDKTEWGSRIGWIYGSVTEDVVTGYRMHNRGWKSVYCVTKRDAFRGTAPINLTDRLHQVLRWATGSVEIFFSRNNAFFASPRMKILQRIAYLNVGIYPFTSFFLIVYCFLPALSLFSGQFIVQTLNVTFLVYLLIISITLCLLALLEIKWSGISLEEWWRNEQFWLIGGTSAHLAAVIQGLLKVVAGIEISFTLTSKSGGEDVDDEFADLYIVKWTSLMIPPITIMMVNLIAIAVGFSRTIYSVIPQWSKLIGGVFFSFWVLAHLYPFAKGLMGRRGRTPTIVYVWSGLVAITISLLWVAINPPAGSTQIGGSFTFP.

The span at 1–19 shows a compositional bias: polar residues; that stretch reads MASNNHFMNSRSNLSTNSD. Disordered regions lie at residues 1–38 and 189–208; these read MASN…TFAR and DNNK…SKMD. Helical transmembrane passes span 289–309 and 319–339; these read VISP…LFLM and AIWL…SWLL. Aspartate 419 is a catalytic residue. Serine 755 is subject to Phosphoserine. Aspartate 848 is a catalytic residue. 6 helical membrane-spanning segments follow: residues 930–950, 956–976, 1002–1022, 1045–1065, 1079–1099, and 1109–1129; these read FFLI…QFIV, TFLV…LLEI, LAAV…SFTL, SLMI…AVGF, LIGG…FAKG, and TIVY…WVAI.

It belongs to the glycosyltransferase 2 family. Plant cellulose synthase-like D subfamily. As to expression, preferentially expressed in root hair cells. Expressed in roots, leaves, stems, flowers and siliques.

It is found in the golgi apparatus membrane. Functionally, thought to be a Golgi-localized beta-glycan synthase that polymerize the backbones of noncellulosic polysaccharides (hemicelluloses) of plant cell wall. Required for synthesis of a cell wall polysaccharide essential for root hair elongation, but not initiation. May be the functional ortholog of rice CSLD1. In Arabidopsis thaliana (Mouse-ear cress), this protein is Cellulose synthase-like protein D3 (CSLD3).